The following is a 185-amino-acid chain: Large ribosomal subunit protein uL5 (185 aa).

It belongs to the universal ribosomal protein uL5 family. Part of the 50S ribosomal subunit; part of the 5S rRNA/L5/L18/L25 subcomplex. Contacts the 5S rRNA and the P site tRNA. Forms a bridge to the 30S subunit in the 70S ribosome.

Its function is as follows. This is one of the proteins that bind and probably mediate the attachment of the 5S RNA into the large ribosomal subunit, where it forms part of the central protuberance. In the 70S ribosome it contacts protein S13 of the 30S subunit (bridge B1b), connecting the 2 subunits; this bridge is implicated in subunit movement. Contacts the P site tRNA; the 5S rRNA and some of its associated proteins might help stabilize positioning of ribosome-bound tRNAs. The chain is Large ribosomal subunit protein uL5 from Bacteroides thetaiotaomicron (strain ATCC 29148 / DSM 2079 / JCM 5827 / CCUG 10774 / NCTC 10582 / VPI-5482 / E50).